A 554-amino-acid chain; its full sequence is (E)-nerolidol synthase TPS18VF (554 aa).

Residues Arg-276, Asp-313, Asp-317, Arg-455, and Asp-458 each contribute to the (2E,6E)-farnesyl diphosphate site. Residues Asp-313 and Asp-317 each contribute to the Mg(2+) site. The DDXXD motif signature appears at 313 to 317 (DDIFD). Mg(2+)-binding residues include Asp-458, Ser-462, and Glu-466.

Belongs to the terpene synthase family. Tpsb subfamily. The cofactor is Mg(2+). Requires Mn(2+) as cofactor. Highly expressed in glandular trichomes.

The catalysed reaction is (2E,6E)-farnesyl diphosphate + H2O = (6E)-nerolidol + diphosphate. It catalyses the reaction (2E)-geranyl diphosphate + H2O = (S)-linalool + diphosphate. The protein operates within secondary metabolite biosynthesis; terpenoid biosynthesis. Functionally, involved in sesquiterpene olefins biosynthesis, constituants of cannabinoids and terpenoids-rich resins. Catalyzes primarily the conversion of (2E)-farnesyl diphosphate to (E)-nerolidol, and the conversion of (2E)-geranyl diphosphate to (+)linalool. This is (E)-nerolidol synthase TPS18VF from Cannabis sativa (Hemp).